The sequence spans 654 residues: Translation factor GUF1, mitochondrial (654 aa).

The region spanning 57 to 237 (ENYRNFSIVA…SVIKNIPSPV (181 aa)) is the tr-type G domain. GTP is bound by residues 66-73 (AHVDHGKS), 130-134 (DTPGH), and 184-187 (NKID).

It belongs to the TRAFAC class translation factor GTPase superfamily. Classic translation factor GTPase family. LepA subfamily.

The protein localises to the mitochondrion inner membrane. The catalysed reaction is GTP + H2O = GDP + phosphate + H(+). Its function is as follows. Promotes mitochondrial protein synthesis. May act as a fidelity factor of the translation reaction, by catalyzing a one-codon backward translocation of tRNAs on improperly translocated ribosomes. Binds to mitochondrial ribosomes in a GTP-dependent manner. The polypeptide is Translation factor GUF1, mitochondrial (Candida albicans (strain WO-1) (Yeast)).